Reading from the N-terminus, the 362-residue chain is Serine/threonine-protein kinase SBK2 (362 aa).

A compositionally biased stretch (basic and acidic residues) spans 1 to 11 (MPGKQSEDKPM). A disordered region spans residues 1-26 (MPGKQSEDKPMEVSTVEDGGDEGLGG). The Protein kinase domain maps to 62 to 330 (YEEVRPLGQG…IKSYLGQPWK (269 aa)). ATP is bound by residues 68–76 (LGQGRFGRV) and Lys-91. Asp-183 (proton acceptor) is an active-site residue. Residues 329-362 (WKQREGEAEELATELREDGWRGGQEAAKGEQPAC) form a disordered region.

It belongs to the protein kinase superfamily. Ser/Thr protein kinase family. STKL subfamily.

It carries out the reaction L-seryl-[protein] + ATP = O-phospho-L-seryl-[protein] + ADP + H(+). The catalysed reaction is L-threonyl-[protein] + ATP = O-phospho-L-threonyl-[protein] + ADP + H(+). The sequence is that of Serine/threonine-protein kinase SBK2 (Sbk2) from Mus musculus (Mouse).